The following is a 238-amino-acid chain: Uridylate kinase (238 aa).

12–15 contacts ATP; that stretch reads KLSG. The involved in allosteric activation by GTP stretch occupies residues 20–25; that stretch reads GEKGFG. Residue Gly54 coordinates UMP. ATP is bound by residues Gly55 and Arg59. Residues Asp72 and 133 to 140 each bind UMP; that span reads TGNPYFST. ATP-binding residues include Tyr166 and Asp169.

It belongs to the UMP kinase family. As to quaternary structure, homohexamer.

The protein localises to the cytoplasm. It carries out the reaction UMP + ATP = UDP + ADP. It participates in pyrimidine metabolism; CTP biosynthesis via de novo pathway; UDP from UMP (UMPK route): step 1/1. Allosterically activated by GTP. Inhibited by UTP. Functionally, catalyzes the reversible phosphorylation of UMP to UDP. The polypeptide is Uridylate kinase (Clostridium botulinum (strain Langeland / NCTC 10281 / Type F)).